A 427-amino-acid polypeptide reads, in one-letter code: 3-phosphoshikimate 1-carboxyvinyltransferase (427 aa).

Residues lysine 22, serine 23, and arginine 27 each contribute to the 3-phosphoshikimate site. Residue lysine 22 coordinates phosphoenolpyruvate. 2 residues coordinate phosphoenolpyruvate: glycine 96 and arginine 124. 3-phosphoshikimate is bound by residues serine 169, serine 170, glutamine 171, serine 197, aspartate 313, asparagine 336, and lysine 340. Glutamine 171 contacts phosphoenolpyruvate. Catalysis depends on aspartate 313, which acts as the Proton acceptor. Positions 344, 386, and 411 each coordinate phosphoenolpyruvate.

Belongs to the EPSP synthase family. In terms of assembly, monomer.

The protein resides in the cytoplasm. It carries out the reaction 3-phosphoshikimate + phosphoenolpyruvate = 5-O-(1-carboxyvinyl)-3-phosphoshikimate + phosphate. Its pathway is metabolic intermediate biosynthesis; chorismate biosynthesis; chorismate from D-erythrose 4-phosphate and phosphoenolpyruvate: step 6/7. Its function is as follows. Catalyzes the transfer of the enolpyruvyl moiety of phosphoenolpyruvate (PEP) to the 5-hydroxyl of shikimate-3-phosphate (S3P) to produce enolpyruvyl shikimate-3-phosphate and inorganic phosphate. This chain is 3-phosphoshikimate 1-carboxyvinyltransferase, found in Escherichia coli O8 (strain IAI1).